The following is a 239-amino-acid chain: 7-cyano-7-deazaguanine synthase (239 aa).

Leucine 13–leucine 23 contributes to the ATP binding site. Positions 199, 214, 217, and 220 each coordinate Zn(2+).

Belongs to the QueC family. Zn(2+) is required as a cofactor.

The enzyme catalyses 7-carboxy-7-deazaguanine + NH4(+) + ATP = 7-cyano-7-deazaguanine + ADP + phosphate + H2O + H(+). The protein operates within purine metabolism; 7-cyano-7-deazaguanine biosynthesis. Functionally, catalyzes the ATP-dependent conversion of 7-carboxy-7-deazaguanine (CDG) to 7-cyano-7-deazaguanine (preQ(0)). This chain is 7-cyano-7-deazaguanine synthase, found in Acidovorax ebreus (strain TPSY) (Diaphorobacter sp. (strain TPSY)).